We begin with the raw amino-acid sequence, 417 residues long: Serine hydroxymethyltransferase 3 (417 aa).

(6S)-5,6,7,8-tetrahydrofolate is bound by residues L121 and G125–L127. At K229 the chain carries N6-(pyridoxal phosphate)lysine. S354–F356 is a (6S)-5,6,7,8-tetrahydrofolate binding site.

The protein belongs to the SHMT family. In terms of assembly, homodimer. Pyridoxal 5'-phosphate serves as cofactor.

The protein resides in the cytoplasm. It carries out the reaction (6R)-5,10-methylene-5,6,7,8-tetrahydrofolate + glycine + H2O = (6S)-5,6,7,8-tetrahydrofolate + L-serine. The protein operates within one-carbon metabolism; tetrahydrofolate interconversion. It functions in the pathway amino-acid biosynthesis; glycine biosynthesis; glycine from L-serine: step 1/1. Catalyzes the reversible interconversion of serine and glycine with tetrahydrofolate (THF) serving as the one-carbon carrier. This reaction serves as the major source of one-carbon groups required for the biosynthesis of purines, thymidylate, methionine, and other important biomolecules. Also exhibits THF-independent aldolase activity toward beta-hydroxyamino acids, producing glycine and aldehydes, via a retro-aldol mechanism. The protein is Serine hydroxymethyltransferase 3 of Pseudomonas aeruginosa (strain ATCC 15692 / DSM 22644 / CIP 104116 / JCM 14847 / LMG 12228 / 1C / PRS 101 / PAO1).